Here is a 642-residue protein sequence, read N- to C-terminus: 5-aminolevulinate synthase, non-specific, mitochondrial (642 aa).

Residues 1–56 constitute a mitochondrion transit peptide; sequence METVVRRCPFLSRVPQAFLQKAGKSLLFYAQNCPKMMEVGAKPAPRTVSTSAAQCQ. Residues 51 to 109 form a disordered region; that stretch reads SAAQCQQVKETPPANEKEKTAKAAVQQAPDESQMAQTPDGTQLPPGHPSPSTSQSSGSK. Polar residues predominate over residues 79-90; sequence PDESQMAQTPDG. Over residues 99-108 the composition is skewed to low complexity; that stretch reads SPSTSQSSGS. Residues Arg-219, Ser-336, and Lys-355 each coordinate substrate. Positions 388, 416, and 444 each coordinate pyridoxal 5'-phosphate. Residue Lys-447 is part of the active site. Position 447 is an N6-(pyridoxal phosphate)lysine (Lys-447). Residues Thr-476 and Thr-477 each coordinate pyridoxal 5'-phosphate. Thr-564 lines the substrate pocket. Pro-578 carries the post-translational modification Hydroxyproline.

This sequence belongs to the class-II pyridoxal-phosphate-dependent aminotransferase family. In terms of assembly, homodimer. Interacts (hydroxylated form) with VHL. Pyridoxal 5'-phosphate serves as cofactor. In terms of processing, in normoxia, is hydroxylated at Pro-578, promoting interaction with VHL, initiating ubiquitination and subsequent degradation via the proteasome. Post-translationally, ubiquitinated; in normoxia following hydroxylation and interaction with VHL, leading to its subsequent degradation via the proteasome. In terms of tissue distribution, expressed in the liver, kidney, brain and testis.

It localises to the mitochondrion inner membrane. It carries out the reaction succinyl-CoA + glycine + H(+) = 5-aminolevulinate + CO2 + CoA. It participates in porphyrin-containing compound metabolism; protoporphyrin-IX biosynthesis; 5-aminolevulinate from glycine: step 1/1. In terms of biological role, catalyzes the pyridoxal 5'-phosphate (PLP)-dependent condensation of succinyl-CoA and glycine to form aminolevulinic acid (ALA), with CoA and CO2 as by-products. This is 5-aminolevulinate synthase, non-specific, mitochondrial (Alas1) from Rattus norvegicus (Rat).